The sequence spans 178 residues: MTLKTRYKEAIRPKLLKDLGLKNIHQVPKVIKVNVNRGLGEAASNSKALEASLNEMATITGQKALVTRSKKAIAGFKIREGMAIGCTVTLRGDRMYSFLERFINLALPRIRDFRGVNPKSFDGRGNYTLGVKEQLIFPEISFDKIDSIRGMDITIVTSASTDQEGKALLKELGMPFSN.

Belongs to the universal ribosomal protein uL5 family. In terms of assembly, part of the 50S ribosomal subunit; part of the 5S rRNA/L5/L18/L25 subcomplex. Contacts the 5S rRNA and the P site tRNA. Forms a bridge to the 30S subunit in the 70S ribosome.

Its function is as follows. This is one of the proteins that bind and probably mediate the attachment of the 5S RNA into the large ribosomal subunit, where it forms part of the central protuberance. In the 70S ribosome it contacts protein S13 of the 30S subunit (bridge B1b), connecting the 2 subunits; this bridge is implicated in subunit movement. Contacts the P site tRNA; the 5S rRNA and some of its associated proteins might help stabilize positioning of ribosome-bound tRNAs. In Prochlorococcus marinus subsp. pastoris (strain CCMP1986 / NIES-2087 / MED4), this protein is Large ribosomal subunit protein uL5.